We begin with the raw amino-acid sequence, 392 residues long: Bifunctional enzyme IspD/IspF (392 aa).

2-C-methyl-D-erythritol 4-phosphate cytidylyltransferase stretches follow at residues 1-234 (MTES…MMRT) and 1-235 (MTES…MRTA). Residues 235–392 (AVGMGYDVHR…AVATIQLPET (158 aa)) form a 2-C-methyl-D-erythritol 2,4-cyclodiphosphate synthase region. Residues aspartate 241 and histidine 243 each contribute to the a divalent metal cation site. Residues 241–243 (DVH) and 267–268 (HS) contribute to the 4-CDP-2-C-methyl-D-erythritol 2-phosphate site. Residue histidine 275 coordinates a divalent metal cation. Residues 289–291 (DIG), 365–368 (TTTE), phenylalanine 372, and arginine 375 each bind 4-CDP-2-C-methyl-D-erythritol 2-phosphate.

The protein in the N-terminal section; belongs to the IspD/TarI cytidylyltransferase family. IspD subfamily. In the C-terminal section; belongs to the IspF family. Requires a divalent metal cation as cofactor.

It carries out the reaction 2-C-methyl-D-erythritol 4-phosphate + CTP + H(+) = 4-CDP-2-C-methyl-D-erythritol + diphosphate. The catalysed reaction is 4-CDP-2-C-methyl-D-erythritol 2-phosphate = 2-C-methyl-D-erythritol 2,4-cyclic diphosphate + CMP. Its pathway is isoprenoid biosynthesis; isopentenyl diphosphate biosynthesis via DXP pathway; isopentenyl diphosphate from 1-deoxy-D-xylulose 5-phosphate: step 2/6. The protein operates within isoprenoid biosynthesis; isopentenyl diphosphate biosynthesis via DXP pathway; isopentenyl diphosphate from 1-deoxy-D-xylulose 5-phosphate: step 4/6. In terms of biological role, bifunctional enzyme that catalyzes the formation of 4-diphosphocytidyl-2-C-methyl-D-erythritol from CTP and 2-C-methyl-D-erythritol 4-phosphate (MEP) (IspD), and catalyzes the conversion of 4-diphosphocytidyl-2-C-methyl-D-erythritol 2-phosphate (CDP-ME2P) to 2-C-methyl-D-erythritol 2,4-cyclodiphosphate (ME-CPP) with a corresponding release of cytidine 5-monophosphate (CMP) (IspF). The polypeptide is Bifunctional enzyme IspD/IspF (Sphingopyxis alaskensis (strain DSM 13593 / LMG 18877 / RB2256) (Sphingomonas alaskensis)).